The primary structure comprises 331 residues: Minor capsid protein A1 (331 aa).

The protein localises to the virion. Its function is as follows. Minor capsid protein. The sequence is that of Minor capsid protein A1 from Escherichia coli (Bacteriophage SP).